The sequence spans 300 residues: uncharacterized protein (300 aa).

The segment at 230-251 is disordered; the sequence is LRQSTSRQSISRQSISRQSTSR. Positions 231-251 are enriched in low complexity; sequence RQSTSRQSISRQSISRQSTSR.

This is an uncharacterized protein from Acanthamoeba polyphaga (Amoeba).